The following is a 688-amino-acid chain: Potassium-transporting ATPase ATP-binding subunit (688 aa).

A run of 4 helical transmembrane segments spans residues 34–54, 62–82, 219–239, and 260–280; these read PVMF…LAIL, AMFT…ANMA, VALT…TATL, and VLVA…LSAI. The active-site 4-aspartylphosphate intermediate is Asp313. Residues Asp350, Glu354, 383 to 390, and Lys401 each bind ATP; that span reads FSAQTRMS. Asp524 and Asp528 together coordinate Mg(2+). The next 3 helical transmembrane spans lie at 594–614, 622–642, and 662–682; these read FAII…LNIM, AILS…PLAL, and IYGL…DLLL.

Belongs to the cation transport ATPase (P-type) (TC 3.A.3) family. Type IA subfamily. As to quaternary structure, the system is composed of three essential subunits: KdpA, KdpB and KdpC.

The protein localises to the cell inner membrane. It catalyses the reaction K(+)(out) + ATP + H2O = K(+)(in) + ADP + phosphate + H(+). Its function is as follows. Part of the high-affinity ATP-driven potassium transport (or Kdp) system, which catalyzes the hydrolysis of ATP coupled with the electrogenic transport of potassium into the cytoplasm. This subunit is responsible for energy coupling to the transport system and for the release of the potassium ions to the cytoplasm. The protein is Potassium-transporting ATPase ATP-binding subunit of Yersinia pseudotuberculosis serotype O:1b (strain IP 31758).